Reading from the N-terminus, the 598-residue chain is Elongation factor 4 (598 aa).

The tr-type G domain maps to 2-184 (KNIRNFSIIA…RLVKEIPAPE (183 aa)). GTP is bound by residues 14 to 19 (DHGKST) and 131 to 134 (NKID).

It belongs to the TRAFAC class translation factor GTPase superfamily. Classic translation factor GTPase family. LepA subfamily.

Its subcellular location is the cell inner membrane. It catalyses the reaction GTP + H2O = GDP + phosphate + H(+). Required for accurate and efficient protein synthesis under certain stress conditions. May act as a fidelity factor of the translation reaction, by catalyzing a one-codon backward translocation of tRNAs on improperly translocated ribosomes. Back-translocation proceeds from a post-translocation (POST) complex to a pre-translocation (PRE) complex, thus giving elongation factor G a second chance to translocate the tRNAs correctly. Binds to ribosomes in a GTP-dependent manner. This chain is Elongation factor 4, found in Proteus mirabilis (strain HI4320).